The chain runs to 223 residues: uncharacterized protein (223 aa).

The segment at 1–30 is disordered; that stretch reads MASATVRNVPLLDDDTIPFGEEDEMRDPSR. Positions 12 to 25 are enriched in acidic residues; it reads LDDDTIPFGEEDEM. Transmembrane regions (helical) follow at residues 35–55, 56–76, 129–149, and 154–174; these read YTHP…ILIY, MFCG…VLFL, IFWL…LFAL, and FKWL…LYGY.

It belongs to the TVP23 family.

It is found in the membrane. This is an uncharacterized protein from Drosophila melanogaster (Fruit fly).